The chain runs to 377 residues: Nitric oxide reductase FlRd-NAD(+) reductase (377 aa).

Belongs to the FAD-dependent oxidoreductase family. FAD serves as cofactor.

The protein resides in the cytoplasm. It carries out the reaction 2 reduced [nitric oxide reductase rubredoxin domain] + NAD(+) + H(+) = 2 oxidized [nitric oxide reductase rubredoxin domain] + NADH. It functions in the pathway nitrogen metabolism; nitric oxide reduction. Functionally, one of at least two accessory proteins for anaerobic nitric oxide (NO) reductase. Reduces the rubredoxin moiety of NO reductase. The chain is Nitric oxide reductase FlRd-NAD(+) reductase from Escherichia coli (strain 55989 / EAEC).